The sequence spans 264 residues: Thymidylate synthase (264 aa).

Arg-21 lines the dUMP pocket. His-51 serves as a coordination point for (6R)-5,10-methylene-5,6,7,8-tetrahydrofolate. Residue 126-127 (RR) participates in dUMP binding. Cys-146 (nucleophile) is an active-site residue. Residues 166 to 169 (RSVD), Asn-177, and 207 to 209 (HLY) each bind dUMP. Position 169 (Asp-169) interacts with (6R)-5,10-methylene-5,6,7,8-tetrahydrofolate. Ser-263 serves as a coordination point for (6R)-5,10-methylene-5,6,7,8-tetrahydrofolate.

The protein belongs to the thymidylate synthase family. Bacterial-type ThyA subfamily. As to quaternary structure, homodimer.

The protein resides in the cytoplasm. It carries out the reaction dUMP + (6R)-5,10-methylene-5,6,7,8-tetrahydrofolate = 7,8-dihydrofolate + dTMP. It participates in pyrimidine metabolism; dTTP biosynthesis. Functionally, catalyzes the reductive methylation of 2'-deoxyuridine-5'-monophosphate (dUMP) to 2'-deoxythymidine-5'-monophosphate (dTMP) while utilizing 5,10-methylenetetrahydrofolate (mTHF) as the methyl donor and reductant in the reaction, yielding dihydrofolate (DHF) as a by-product. This enzymatic reaction provides an intracellular de novo source of dTMP, an essential precursor for DNA biosynthesis. In Anoxybacillus flavithermus (strain DSM 21510 / WK1), this protein is Thymidylate synthase.